Consider the following 270-residue polypeptide: NAD kinase (270 aa).

The active-site Proton acceptor is D63. NAD(+) is bound by residues 63-64 (DG), 131-132 (NE), K142, R159, D161, 172-177 (TAYAMS), A196, and Q230.

Belongs to the NAD kinase family. The cofactor is a divalent metal cation.

The protein localises to the cytoplasm. The catalysed reaction is NAD(+) + ATP = ADP + NADP(+) + H(+). Its function is as follows. Involved in the regulation of the intracellular balance of NAD and NADP, and is a key enzyme in the biosynthesis of NADP. Catalyzes specifically the phosphorylation on 2'-hydroxyl of the adenosine moiety of NAD to yield NADP. The chain is NAD kinase from Methanoculleus marisnigri (strain ATCC 35101 / DSM 1498 / JR1).